We begin with the raw amino-acid sequence, 158 residues long: SsrA-binding protein (158 aa).

It belongs to the SmpB family.

Its subcellular location is the cytoplasm. Functionally, required for rescue of stalled ribosomes mediated by trans-translation. Binds to transfer-messenger RNA (tmRNA), required for stable association of tmRNA with ribosomes. tmRNA and SmpB together mimic tRNA shape, replacing the anticodon stem-loop with SmpB. tmRNA is encoded by the ssrA gene; the 2 termini fold to resemble tRNA(Ala) and it encodes a 'tag peptide', a short internal open reading frame. During trans-translation Ala-aminoacylated tmRNA acts like a tRNA, entering the A-site of stalled ribosomes, displacing the stalled mRNA. The ribosome then switches to translate the ORF on the tmRNA; the nascent peptide is terminated with the 'tag peptide' encoded by the tmRNA and targeted for degradation. The ribosome is freed to recommence translation, which seems to be the essential function of trans-translation. The chain is SsrA-binding protein from Bartonella tribocorum (strain CIP 105476 / IBS 506).